Here is a 229-residue protein sequence, read N- to C-terminus: UPF0758 protein CLH_0547 (229 aa).

One can recognise an MPN domain in the interval 107–229; it reads KIMSPNDIAM…FISLKEKGFI (123 aa). Zn(2+) contacts are provided by histidine 178, histidine 180, and aspartate 191. The JAMM motif motif lies at 178 to 191; sequence HNHPSGDPTPSKED.

Belongs to the UPF0758 family.

The polypeptide is UPF0758 protein CLH_0547 (Clostridium botulinum (strain Alaska E43 / Type E3)).